The chain runs to 312 residues: Porphobilinogen deaminase (312 aa).

S-(dipyrrolylmethanemethyl)cysteine is present on Cys235.

The protein belongs to the HMBS family. Monomer. Dipyrromethane is required as a cofactor.

The enzyme catalyses 4 porphobilinogen + H2O = hydroxymethylbilane + 4 NH4(+). It participates in porphyrin-containing compound metabolism; protoporphyrin-IX biosynthesis; coproporphyrinogen-III from 5-aminolevulinate: step 2/4. In terms of biological role, tetrapolymerization of the monopyrrole PBG into the hydroxymethylbilane pre-uroporphyrinogen in several discrete steps. This Mycolicibacterium gilvum (strain PYR-GCK) (Mycobacterium gilvum (strain PYR-GCK)) protein is Porphobilinogen deaminase.